The primary structure comprises 935 residues: Probable mediator of RNA polymerase II transcription subunit 15c (935 aa).

The span at 1-13 (MEGNTNWKPNEQG) shows a compositional bias: polar residues. 5 disordered regions span residues 1 to 28 (MEGN…WRSQ), 170 to 190 (NLPT…VSSS), 495 to 526 (SSVQ…HQMQ), 548 to 611 (QQVS…PVPG), and 635 to 654 (SSSK…PPEP). Residues 511–526 (MQQQQPQQGNHQHQMQ) are compositionally biased toward low complexity. Composition is skewed to polar residues over residues 548 to 577 (QQVS…SPQL) and 635 to 644 (SSSKLGTQET).

The protein belongs to the plant Mediator complex subunit 15 family. As to quaternary structure, component of the Mediator complex.

The protein resides in the nucleus. Its function is as follows. Component of the Mediator complex, a coactivator involved in the regulated transcription of nearly all RNA polymerase II-dependent genes. Mediator functions as a bridge to convey information from gene-specific regulatory proteins to the basal RNA polymerase II transcription machinery. The Mediator complex, having a compact conformation in its free form, is recruited to promoters by direct interactions with regulatory proteins and serves for the assembly of a functional preinitiation complex with RNA polymerase II and the general transcription factors. The chain is Probable mediator of RNA polymerase II transcription subunit 15c (MED15C) from Arabidopsis thaliana (Mouse-ear cress).